Here is a 52-residue protein sequence, read N- to C-terminus: Large ribosomal subunit protein bL32c (52 aa).

This sequence belongs to the bacterial ribosomal protein bL32 family.

It localises to the plastid. The protein localises to the chloroplast. This is Large ribosomal subunit protein bL32c from Morus indica (Mulberry).